A 248-amino-acid chain; its full sequence is UPF0736 protein BCG9842_B4111 (248 aa).

The protein belongs to the UPF0736 family.

This is UPF0736 protein BCG9842_B4111 from Bacillus cereus (strain G9842).